The chain runs to 583 residues: Torsin-1A-interacting protein 1 (583 aa).

Over 1–339 the chain is Nuclear; the sequence is MAGERWRAEG…DESSVKIKWW (339 aa). The interval 23–208 is disordered; it reads APIREGRRRL…PPLRSPRPDA (186 aa). At S60 the chain carries Phosphoserine. 2 stretches are compositionally biased toward basic and acidic residues: residues 70 to 101 and 115 to 132; these read FEPR…EVRE and GPQE…RLEQ. A phosphoserine mark is found at S134, S142, S155, and S157. Residues 166-188 are compositionally biased toward polar residues; it reads SSQPVTSQTVSKKTVRTPETSVM. S189 carries the phosphoserine modification. T222 is modified (phosphothreonine). Phosphoserine is present on residues S228, S231, and S242. K309 participates in a covalent cross-link: Glycyl lysine isopeptide (Lys-Gly) (interchain with G-Cter in SUMO2). Phosphoserine is present on S316. A helical membrane pass occupies residues 340 to 360; that stretch reads LLILVAALAMGIYWFFHTPVV. The interaction with TOR1A stretch occupies residues 356-583; it reads HTPVVETTAV…ENALKAGSCL (228 aa). Residues 360–388 adopt a coiled-coil conformation; it reads VETTAVQEFQNQMKQLQSKYQSQDEKLWK. The Perinuclear space portion of the chain corresponds to 361–583; that stretch reads ETTAVQEFQN…ENALKAGSCL (223 aa). N-linked (GlcNAc...) asparagine glycosylation is present at N399.

This sequence belongs to the TOR1AIP family. In terms of assembly, interacts with ATP1B4. Interacts with TOR1A (ATP-bound). Interacts with TOR1B, TOR2A and TOR3A. Interacts with VIM.

Its subcellular location is the nucleus inner membrane. In terms of biological role, required for nuclear membrane integrity. Induces TOR1A and TOR1B ATPase activity and is required for their location on the nuclear membrane. Binds to A- and B-type lamins. Possible role in membrane attachment and assembly of the nuclear lamina. The protein is Torsin-1A-interacting protein 1 (Tor1aip1) of Rattus norvegicus (Rat).